The primary structure comprises 250 residues: ATP synthase subunit a (250 aa).

Helical transmembrane passes span 29–49 (ASLF…FATS), 84–104 (FFPL…LGMF), 114–134 (IIVT…YGFY), 143–163 (VFVP…IEII), 193–213 (FVAS…LPLI), and 216–236 (VALT…FAVL).

The protein belongs to the ATPase A chain family. In terms of assembly, F-type ATPases have 2 components, CF(1) - the catalytic core - and CF(0) - the membrane proton channel. CF(1) has five subunits: alpha(3), beta(3), gamma(1), delta(1), epsilon(1). CF(0) has three main subunits: a(1), b(2) and c(9-12). The alpha and beta chains form an alternating ring which encloses part of the gamma chain. CF(1) is attached to CF(0) by a central stalk formed by the gamma and epsilon chains, while a peripheral stalk is formed by the delta and b chains.

It is found in the cell inner membrane. In terms of biological role, key component of the proton channel; it plays a direct role in the translocation of protons across the membrane. The polypeptide is ATP synthase subunit a (Rhizobium etli (strain CIAT 652)).